Here is a 362-residue protein sequence, read N- to C-terminus: UPF0283 membrane protein Arad_2632 (362 aa).

Residues 1 to 11 are compositionally biased toward basic and acidic residues; the sequence is MTKPTEDDPKG. Positions 1-47 are disordered; sequence MTKPTEDDPKGISRRPAAFSLEQEASREGAHTKTTAETPRRKPQSFD. 2 consecutive transmembrane segments (helical) span residues 82–102 and 118–138; these read FSFGKVALSAFGILVSLAFGL and LGYTALTVLAIGILAVLAIVV.

The protein belongs to the UPF0283 family.

It is found in the cell inner membrane. The polypeptide is UPF0283 membrane protein Arad_2632 (Rhizobium rhizogenes (strain K84 / ATCC BAA-868) (Agrobacterium radiobacter)).